Consider the following 606-residue polypeptide: Pescadillo homolog (606 aa).

One can recognise a BRCT domain in the interval 346–447; the sequence is LSTSLFSPYT…KILLEGPYGQ (102 aa). Positions 461–497 are disordered; the sequence is YEGAYDPAAGPLGPSGVEQESESEADEVSEEDEEDQG. The span at 479–496 shows a compositional bias: acidic residues; that stretch reads QESESEADEVSEEDEEDQ.

Belongs to the pescadillo family. As to quaternary structure, component of the NOP7 complex, composed of ERB1, NOP7 and YTM1. The complex is held together by ERB1, which interacts with NOP7 via its N-terminal domain and with YTM1 via a high-affinity interaction between the seven-bladed beta-propeller domains of the 2 proteins. The NOP7 complex associates with the 66S pre-ribosome.

It localises to the nucleus. The protein resides in the nucleolus. The protein localises to the nucleoplasm. Component of the NOP7 complex, which is required for maturation of the 25S and 5.8S ribosomal RNAs and formation of the 60S ribosome. The protein is Pescadillo homolog of Laccaria bicolor (strain S238N-H82 / ATCC MYA-4686) (Bicoloured deceiver).